Reading from the N-terminus, the 379-residue chain is Chaperone protein DnaJ (379 aa).

The 66-residue stretch at 4-69 (DLYETLGVKK…QKRAAYDRYG (66 aa)) folds into the J domain. The segment at 137-215 (GKTAQIRVPT…CHGQGRVTEE (79 aa)) adopts a CR-type zinc-finger fold. 8 residues coordinate Zn(2+): Cys-150, Cys-153, Cys-167, Cys-170, Cys-189, Cys-192, Cys-203, and Cys-206. 4 CXXCXGXG motif repeats span residues 150-157 (CDVCTGSG), 167-174 (CATCQGSG), 189-196 (CPTCGGRG), and 203-210 (CTKCHGQG).

It belongs to the DnaJ family. In terms of assembly, homodimer. It depends on Zn(2+) as a cofactor.

Its subcellular location is the cytoplasm. Its function is as follows. Participates actively in the response to hyperosmotic and heat shock by preventing the aggregation of stress-denatured proteins and by disaggregating proteins, also in an autonomous, DnaK-independent fashion. Unfolded proteins bind initially to DnaJ; upon interaction with the DnaJ-bound protein, DnaK hydrolyzes its bound ATP, resulting in the formation of a stable complex. GrpE releases ADP from DnaK; ATP binding to DnaK triggers the release of the substrate protein, thus completing the reaction cycle. Several rounds of ATP-dependent interactions between DnaJ, DnaK and GrpE are required for fully efficient folding. Also involved, together with DnaK and GrpE, in the DNA replication of plasmids through activation of initiation proteins. This is Chaperone protein DnaJ from Sinorhizobium fredii (strain NBRC 101917 / NGR234).